Reading from the N-terminus, the 714-residue chain is Ribonucleoside-diphosphate reductase 2 subunit alpha (714 aa).

Residues T161, 177-178 (SC), G206, 386-390 (NLCSE), and 588-592 (PTGSI) each bind substrate. Cysteines 178 and 415 form a disulfide. The active-site Proton acceptor is N386. The active-site Cysteine radical intermediate is the C388. The active-site Proton acceptor is E390.

It belongs to the ribonucleoside diphosphate reductase large chain family. Tetramer of two alpha and two beta subunits.

The enzyme catalyses a 2'-deoxyribonucleoside 5'-diphosphate + [thioredoxin]-disulfide + H2O = a ribonucleoside 5'-diphosphate + [thioredoxin]-dithiol. Its activity is regulated as follows. Under complex allosteric control mediated by deoxynucleoside triphosphates and ATP binding. The type of nucleotide bound at the specificity site determines substrate preference. It seems probable that ATP makes the enzyme reduce CDP and UDP, dGTP favors ADP reduction and dTTP favors GDP reduction. Its function is as follows. Provides the precursors necessary for DNA synthesis. Catalyzes the biosynthesis of deoxyribonucleotides from the corresponding ribonucleotides. R1E contains the binding sites for both substrates and allosteric effectors and carries out the actual reduction of the ribonucleotide. This Escherichia coli (strain K12) protein is Ribonucleoside-diphosphate reductase 2 subunit alpha (nrdE).